The following is a 321-amino-acid chain: MIFLTLEHILTHISFSIVSIVITIHLITLLVDEIVGLYDSLEKGMISTFLCITGLLVTRWIYSGHLPLSNLYESLIFLSWSFSIIHMIPYFKNHKNHLSLVTAPSAIFTQGFATSGLLTEMHQSAILVPALQSQWLMMHVSMMVLSYGALLCGSLLSVALLVITFRKNIDIFGKRNHLLIGSFSFGEIQYTNERSNVLRNVSFLSLRNYRRYQLIRQLDNWSYRVISLGFIFLTIGILSGAVWANEAWGSYWNWDPKETWAFITWTIFAIYLHTRTNKNFQGADSAIVASIGFIIIWICYFGVNLLGIGLHSYGSFILTSN.

8 helical membrane-spanning segments follow: residues 17 to 37, 44 to 64, 71 to 91, 98 to 118, 143 to 163, 225 to 245, 258 to 275, and 286 to 306; these read IVSI…IVGL, GMIS…IYSG, LYES…IPYF, LSLV…SGLL, MVLS…LLVI, VISL…VWAN, ETWA…LHTR, and AIVA…VNLL.

The protein belongs to the CcmF/CycK/Ccl1/NrfE/CcsA family. In terms of assembly, may interact with Ccs1.

The protein localises to the plastid. Its subcellular location is the chloroplast thylakoid membrane. Its function is as follows. Required during biogenesis of c-type cytochromes (cytochrome c6 and cytochrome f) at the step of heme attachment. This is Cytochrome c biogenesis protein CcsA from Buxus microphylla (Littleleaf boxwood).